A 228-amino-acid polypeptide reads, in one-letter code: MPAFFVTGTDTEIGKTTIAAGLLHAARSAGLSTAAAKPVASGCEPTAQGLRNGDALVLLGQCSLALAYEQVNPLAFAPAIAPHLAAREAGVELSAARLHEAVREVLALQADFTLVEGAGGWRVPLLGRENLSDLARLLALPVVLVVGVRLGCINHALLSAEAILGDGLALAGWVANVVDPATSRLEENLATLAERLPAPCLGRVPRLEEATPAAVAAHLDLRPLGIGL.

Glu-12–Thr-17 provides a ligand contact to ATP. Mg(2+) is bound at residue Thr-16. Lys-37 is an active-site residue. Ser-41 provides a ligand contact to substrate. Residues Asp-54, Glu-116 to Gly-119, and Pro-205 to Leu-207 contribute to the ATP site. Residues Asp-54 and Glu-116 each coordinate Mg(2+).

This sequence belongs to the dethiobiotin synthetase family. Homodimer. It depends on Mg(2+) as a cofactor.

It localises to the cytoplasm. The enzyme catalyses (7R,8S)-7,8-diammoniononanoate + CO2 + ATP = (4R,5S)-dethiobiotin + ADP + phosphate + 3 H(+). It participates in cofactor biosynthesis; biotin biosynthesis; biotin from 7,8-diaminononanoate: step 1/2. Catalyzes a mechanistically unusual reaction, the ATP-dependent insertion of CO2 between the N7 and N8 nitrogen atoms of 7,8-diaminopelargonic acid (DAPA, also called 7,8-diammoniononanoate) to form a ureido ring. The sequence is that of ATP-dependent dethiobiotin synthetase BioD from Pseudomonas aeruginosa (strain ATCC 15692 / DSM 22644 / CIP 104116 / JCM 14847 / LMG 12228 / 1C / PRS 101 / PAO1).